Consider the following 189-residue polypeptide: SAGA-associated factor 11 homolog (189 aa).

An SGF11-type zinc finger spans residues 94–115 (CTCPNCDRLVAATRFAPHLEKC). The interval 128 to 189 (RRLATKEGSS…GSKKNNGKTF (62 aa)) is disordered. Positions 136–145 (SSASSTSTST) are enriched in low complexity. A Phosphoserine modification is found at S165. Over residues 175–189 (NSRNNGSKKNNGKTF) the composition is skewed to low complexity.

It belongs to the SGF11 family. As to quaternary structure, component of some SAGA transcription coactivator-HAT complexes, at least composed of Ada2b, not/nonstop, Pcaf/Gcn5, Sgf11 and Spt3. Within the SAGA complex, Sgf11, e(y)2, and not/nonstop form an additional subcomplex of SAGA called the DUB module (deubiquitination module). Interacts directly with not/nonstop. Interacts with the AMEX complex component xmas-2. Interacts with Cbp80; important for promoter recruitment of Sgf11 that is not associated with the DUB module.

The protein localises to the nucleus. The protein resides in the nucleoplasm. Its subcellular location is the cytoplasm. Its function is as follows. Component of the transcription regulatory histone acetylation (HAT) complex SAGA, a multiprotein complex that activates transcription by remodeling chromatin and mediating histone acetylation and deubiquitination. Within the SAGA complex, participates in a subcomplex that specifically deubiquitinates histone H2B. The SAGA complex is recruited to specific gene promoters by activators, where it is required for transcription. Required for nuclear receptor-mediated transactivation. Binds independently on SAGA to promoters in an RNA-dependent manner. Binds to mRNA and is essential for total mRNA export from the nucleus. Required to counteract heterochromatin silencing. Controls the development of neuronal connectivity in visual system by being required for accurate axon targeting in the optic lobe. Required for expression of ecdysone-induced genes such as br/broad. The sequence is that of SAGA-associated factor 11 homolog from Drosophila virilis (Fruit fly).